Consider the following 142-residue polypeptide: Galactose-6-phosphate isomerase subunit LacA (142 aa).

Belongs to the LacAB/RpiB family. As to quaternary structure, heteromultimeric protein consisting of LacA and LacB.

It carries out the reaction aldehydo-D-galactose 6-phosphate = keto-D-tagatose 6-phosphate. Its pathway is carbohydrate metabolism; D-galactose 6-phosphate degradation; D-tagatose 6-phosphate from D-galactose 6-phosphate: step 1/1. The chain is Galactose-6-phosphate isomerase subunit LacA from Staphylococcus aureus (strain JH9).